We begin with the raw amino-acid sequence, 43 residues long: Hainantoxin F5-22.36 (43 aa).

3 disulfide bridges follow: C1–C19, C8–C24, and C18–C38.

This sequence belongs to the neurotoxin 14 (magi-1) family. 02 (HWTX-XVIc) subfamily. As to expression, expressed by the venom gland.

It localises to the secreted. Functionally, probable ion channel inhibitor. The sequence is that of Hainantoxin F5-22.36 from Cyriopagopus hainanus (Chinese bird spider).